The following is a 122-amino-acid chain: Small ribosomal subunit protein uS13 (122 aa).

Residues 97–122 are disordered; sequence PVRGQRTHTNARTRKGPAKAIAGKKK.

Belongs to the universal ribosomal protein uS13 family. Part of the 30S ribosomal subunit. Forms a loose heterodimer with protein S19. Forms two bridges to the 50S subunit in the 70S ribosome.

Functionally, located at the top of the head of the 30S subunit, it contacts several helices of the 16S rRNA. In the 70S ribosome it contacts the 23S rRNA (bridge B1a) and protein L5 of the 50S subunit (bridge B1b), connecting the 2 subunits; these bridges are implicated in subunit movement. Contacts the tRNAs in the A and P-sites. This chain is Small ribosomal subunit protein uS13, found in Brucella anthropi (strain ATCC 49188 / DSM 6882 / CCUG 24695 / JCM 21032 / LMG 3331 / NBRC 15819 / NCTC 12168 / Alc 37) (Ochrobactrum anthropi).